The primary structure comprises 1712 residues: Collagen alpha-2(IV) chain (1712 aa).

The N-terminal stretch at 1–25 (MGRDQRAVAGPALRRWLLLGTVTVG) is a signal peptide. The propeptide at 26–183 (FLAQSVLAGV…LPKEERDRYR (158 aa)) is N-terminal propeptide (7S domain). Disordered stretches follow at residues 60–237 (RGQP…GFYG), 302–448 (GLRG…PDGF), 507–640 (INGE…DAGL), 690–906 (GLPG…SPGF), and 1157–1480 (TGPP…GLPG). A compositionally biased stretch (low complexity) spans 68 to 84 (PQGYNGPPGLQGFPGLQ). Residues 121–130 (GHPGQGGPRG) are compositionally biased toward gly residues. N-linked (GlcNAc...) asparagine glycosylation occurs at Asn-138. Positions 140–153 (TQGDSGPQGPPGSE) are enriched in low complexity. Basic and acidic residues predominate over residues 175 to 186 (PKEERDRYRGEP). The interval 184–1484 (GEPGEPGLVG…SPGLPGMPGR (1301 aa)) is triple-helical region. 2 stretches are compositionally biased toward pro residues: residues 215–224 (RPGPPGPPGP) and 433–445 (PPGP…PPGP). Basic and acidic residues-rich tracts occupy residues 511–520 (PGRKGDRGDP) and 571–582 (KGDDGSPGRDGL). Low complexity-rich tracts occupy residues 628–640 (LKGQ…DAGL) and 698–710 (TGAK…PGFA). Gly residues predominate over residues 711 to 720 (GADGGPGPRG). A compositionally biased stretch (low complexity) spans 721 to 730 (LPGDAGREGF). A compositionally biased stretch (pro residues) spans 752–766 (DGSPGPIGLPGPDGP). Low complexity-rich tracts occupy residues 769–778 (ERGLPGEVLG), 813–823 (MPGMPGLKGQP), 831–844 (QPGL…HGFP), 1302–1328 (GSAA…KGWA), and 1400–1421 (QPGT…EMGP). The region spanning 1489–1712 (GYLLVKHSQT…SRCQVCMKNL (224 aa)) is the Collagen IV NC1 domain. Tyr-1490 is modified (3'-bromotyrosine). 6 disulfides stabilise this stretch: Cys-1504–Cys-1593, Cys-1537–Cys-1590, Cys-1549–Cys-1555, Cys-1612–Cys-1708, Cys-1646–Cys-1705, and Cys-1658–Cys-1665.

It belongs to the type IV collagen family. As to quaternary structure, there are six type IV collagen isoforms, alpha 1(IV)-alpha 6(IV), each of which can form a triple helix structure with 2 other chains to generate type IV collagen network. Interacts with EFEMP2. Prolines at the third position of the tripeptide repeating unit (G-X-Y) are hydroxylated in some or all of the chains. Post-translationally, type IV collagens contain numerous cysteine residues which are involved in inter- and intramolecular disulfide bonding. 12 of these, located in the NC1 domain, are conserved in all known type IV collagens. In terms of processing, the trimeric structure of the NC1 domains is stabilized by covalent bonds between Lys and Met residues. Proteolytic processing produces the C-terminal NC1 peptide, canstatin.

The protein resides in the secreted. It localises to the extracellular space. Its subcellular location is the extracellular matrix. The protein localises to the basement membrane. Its function is as follows. Type IV collagen is the major structural component of glomerular basement membranes (GBM), forming a 'chicken-wire' meshwork together with laminins, proteoglycans and entactin/nidogen. In terms of biological role, canstatin, a cleavage product corresponding to the collagen alpha 2(IV) NC1 domain, possesses both anti-angiogenic and anti-tumor cell activity. It inhibits proliferation and migration of endothelial cells, reduces mitochondrial membrane potential, and induces apoptosis. Specifically induces Fas-dependent apoptosis and activates procaspase-8 and -9 activity. Ligand for alphavbeta3 and alphavbeta5 integrins. In Homo sapiens (Human), this protein is Collagen alpha-2(IV) chain.